A 98-amino-acid chain; its full sequence is MSMVHMNIMMAFAVSLVGLLMYRSHLMSSLLCLEGMMLSLFVMAALTILNSHFTLASMMPIILLVFAACEAALGLSLLVMVSNTYGTDYVQNLNLLQC.

3 helical membrane-spanning segments follow: residues 1 to 21, 29 to 49, and 61 to 81; these read MSMVHMNIMMAFAVSLVGLLM, SLLCLEGMMLSLFVMAALTIL, and IILLVFAACEAALGLSLLVMV.

It belongs to the complex I subunit 4L family. In terms of assembly, core subunit of respiratory chain NADH dehydrogenase (Complex I) which is composed of 45 different subunits.

Its subcellular location is the mitochondrion inner membrane. It carries out the reaction a ubiquinone + NADH + 5 H(+)(in) = a ubiquinol + NAD(+) + 4 H(+)(out). In terms of biological role, core subunit of the mitochondrial membrane respiratory chain NADH dehydrogenase (Complex I) which catalyzes electron transfer from NADH through the respiratory chain, using ubiquinone as an electron acceptor. Part of the enzyme membrane arm which is embedded in the lipid bilayer and involved in proton translocation. This is NADH-ubiquinone oxidoreductase chain 4L (MT-ND4L) from Bos mutus grunniens (Wild yak).